A 499-amino-acid chain; its full sequence is MSHSNPPTGASGGPGSASASAAPARGYYSLKRSIQTAFNDPLDRGLGPPAYQSKVRVMDKYQVIGFISSGTYGRVYKARGRQGQPGEFAIKKFKPDKEGEQITYTGISQSAIREMALCSELRHPNVIRLVETILEDKAIFMVFEYAEHDLLQIIHHHTQQPKHPIPPQTIKSIMFQLLNGCQYLHTNWVLHRDLKPANIMVTSSGEVKVGDLGLARIFWKPVRTLMQGDKVVVTIWYRAPELLMGSHHYTPAVDMWAVGCIFAELLSLRPIFKGEEAKMDNTKKGGSRDMPFQRHQMQKIVDIMGMPTKERWPLLTSMPDYDKLPLLQPPLSASGYSQQPAHSHHHHQHYNQGPQYGGRAGGPTSSSSANSSSAAAAASQSHLDKWYYHTVSQGQTAGPMPHAPPGSLASLGVEGYKLLAGLLEYDPEKRLTAAAALQHNFFSTGDRVSANCFEGCKAEYPHRRVSQEDNDIRTGSVPGTKRSGMPDDSMGRPGKRVKE.

The segment at 1 to 21 (MSHSNPPTGASGGPGSASASA) is disordered. In terms of domain architecture, Protein kinase spans 61 to 442 (YQVIGFISSG…AAAALQHNFF (382 aa)). Residues 67–75 (ISSGTYGRV) and K91 contribute to the ATP site. D193 serves as the catalytic Proton acceptor. Disordered regions lie at residues 332-376 (SASG…SAAA) and 463-499 (RRVS…RVKE). The segment covering 365 to 376 (SSSSANSSSAAA) has biased composition (low complexity). A compositionally biased stretch (basic and acidic residues) spans 463–472 (RRVSQEDNDI).

Belongs to the protein kinase superfamily. CMGC Ser/Thr protein kinase family. CDC2/CDKX subfamily. Component of the SRB8-11 complex, a regulatory module of the Mediator complex. It depends on Mg(2+) as a cofactor.

It localises to the nucleus. It carries out the reaction L-seryl-[protein] + ATP = O-phospho-L-seryl-[protein] + ADP + H(+). The enzyme catalyses L-threonyl-[protein] + ATP = O-phospho-L-threonyl-[protein] + ADP + H(+). It catalyses the reaction [DNA-directed RNA polymerase] + ATP = phospho-[DNA-directed RNA polymerase] + ADP + H(+). Its function is as follows. Component of the SRB8-11 complex. The SRB8-11 complex is a regulatory module of the Mediator complex which is itself involved in regulation of basal and activated RNA polymerase II-dependent transcription. The SRB8-11 complex may be involved in the transcriptional repression of a subset of genes regulated by Mediator. It may inhibit the association of the Mediator complex with RNA polymerase II to form the holoenzyme complex. The SRB8-11 complex phosphorylates the C-terminal domain (CTD) of the largest subunit of RNA polymerase II. This Pyricularia oryzae (strain 70-15 / ATCC MYA-4617 / FGSC 8958) (Rice blast fungus) protein is Serine/threonine-protein kinase SSN3 (SSN3).